We begin with the raw amino-acid sequence, 370 residues long: CST complex subunit STN1 (370 aa).

Residues 1–187 (MESNSSQCED…KVYDQPFHSP (187 aa)) form an interaction with CTC1 region. Residues 57 to 157 (VDILGTVIGV…EIHATTYYKV (101 aa)) constitute a DNA-binding region (OB). Winged helix-turn-helix (wHTH) regions lie at residues 193–297 (EALS…YVTR) and 298–370 (EDKE…YTAF).

This sequence belongs to the STN1 family. In terms of assembly, component of the CST complex, composed of TEN1/C17orf106, CTC1/C17orf68 and STN1; in the complex interacts directly with TEN1 and CTC1. Interacts with ACD/TPP1, POT1 and POLA1.

Its subcellular location is the nucleus. It is found in the chromosome. The protein resides in the telomere. Component of the CST complex proposed to act as a specialized replication factor promoting DNA replication under conditions of replication stress or natural replication barriers such as the telomere duplex. The CST complex binds single-stranded DNA with high affinity in a sequence-independent manner, while isolated subunits bind DNA with low affinity by themselves. Initially the CST complex has been proposed to protect telomeres from DNA degradation. However, the CST complex has been shown to be involved in several aspects of telomere replication. The CST complex inhibits telomerase and is involved in telomere length homeostasis; it is proposed to bind to newly telomerase-synthesized 3' overhangs and to terminate telomerase action implicating the association with the ACD:POT1 complex thus interfering with its telomerase stimulation activity. The CST complex is also proposed to be involved in fill-in synthesis of the telomeric C-strand probably implicating recruitment and activation of DNA polymerase alpha. The CST complex facilitates recovery from many forms of exogenous DNA damage; seems to be involved in the re-initiation of DNA replication at repaired forks and/or dormant origins. Required for efficicient replication of the duplex region of the telomere. Promotes efficient replication of lagging-strand telomeres. Promotes general replication start following replication-fork stalling implicating new origin firing. May be in involved in C-strand fill-in during late S/G2 phase independent of its role in telomere duplex replication. This Bos taurus (Bovine) protein is CST complex subunit STN1.